Here is a 161-residue protein sequence, read N- to C-terminus: Cyclic pyranopterin monophosphate synthase (161 aa).

Substrate is bound by residues L73 to H75 and M110 to E111. The active site involves D125.

It belongs to the MoaC family. In terms of assembly, homohexamer; trimer of dimers.

The enzyme catalyses (8S)-3',8-cyclo-7,8-dihydroguanosine 5'-triphosphate = cyclic pyranopterin phosphate + diphosphate. Its pathway is cofactor biosynthesis; molybdopterin biosynthesis. In terms of biological role, catalyzes the conversion of (8S)-3',8-cyclo-7,8-dihydroguanosine 5'-triphosphate to cyclic pyranopterin monophosphate (cPMP). The protein is Cyclic pyranopterin monophosphate synthase of Pseudomonas syringae pv. tomato (strain ATCC BAA-871 / DC3000).